Here is a 158-residue protein sequence, read N- to C-terminus: SsrA-binding protein (158 aa).

The protein belongs to the SmpB family.

The protein resides in the cytoplasm. Required for rescue of stalled ribosomes mediated by trans-translation. Binds to transfer-messenger RNA (tmRNA), required for stable association of tmRNA with ribosomes. tmRNA and SmpB together mimic tRNA shape, replacing the anticodon stem-loop with SmpB. tmRNA is encoded by the ssrA gene; the 2 termini fold to resemble tRNA(Ala) and it encodes a 'tag peptide', a short internal open reading frame. During trans-translation Ala-aminoacylated tmRNA acts like a tRNA, entering the A-site of stalled ribosomes, displacing the stalled mRNA. The ribosome then switches to translate the ORF on the tmRNA; the nascent peptide is terminated with the 'tag peptide' encoded by the tmRNA and targeted for degradation. The ribosome is freed to recommence translation, which seems to be the essential function of trans-translation. The polypeptide is SsrA-binding protein (Symbiobacterium thermophilum (strain DSM 24528 / JCM 14929 / IAM 14863 / T)).